Here is a 422-residue protein sequence, read N- to C-terminus: MLYYLFQYLEKFDFPGAGMFGYVSFRSLMAIILSLLISAIFGEYFINLLKRKQITETQRDASIDPFNVKKVGVPTMGGIIIIVAILIPCLLLGKLHNIYMILMLITTIWLGTLGFLDDYIKVFRKDKEGLHGKFKIIGQVGLGLIVGLTLYLSPSVVIRENVEIQRGGEIVEVVHKEQDQKSTKTTIPFFKNNNLDYADFVGFLGNNAQAVGWIIFVLVTIFVVTAVSNGANLNDGMDGMAAGNSAIIGLTLGILAYVSSHIEYAGYLNIMYIPGSEELVIFICSFIGALIGFLWYNAFPAQVFMGDTGSLTIGGIIAVFAIIIHKELLIPILCGIFLVENLSVILQVRYFKSGKKKGHLQRVFKRAPIHDHFRTTLAQLDPNCSYLFMKPNSVFHESKITVRFWIVTIVLAAITIITLKIR.

Helical transmembrane passes span 28-48 (LMAI…FINL), 71-91 (VGVP…PCLL), 95-115 (LHNI…TLGF), 136-156 (IIGQ…SPSV), 208-228 (AQAV…TAVS), 239-259 (GMAA…AYVS), 279-299 (LVIF…YNAF), 313-333 (IGGI…IPIL), and 399-419 (KITV…IITL).

This sequence belongs to the glycosyltransferase 4 family. MraY subfamily. Mg(2+) serves as cofactor.

It is found in the cell inner membrane. It catalyses the reaction UDP-N-acetyl-alpha-D-muramoyl-L-alanyl-gamma-D-glutamyl-meso-2,6-diaminopimeloyl-D-alanyl-D-alanine + di-trans,octa-cis-undecaprenyl phosphate = di-trans,octa-cis-undecaprenyl diphospho-N-acetyl-alpha-D-muramoyl-L-alanyl-D-glutamyl-meso-2,6-diaminopimeloyl-D-alanyl-D-alanine + UMP. Its pathway is cell wall biogenesis; peptidoglycan biosynthesis. Catalyzes the initial step of the lipid cycle reactions in the biosynthesis of the cell wall peptidoglycan: transfers peptidoglycan precursor phospho-MurNAc-pentapeptide from UDP-MurNAc-pentapeptide onto the lipid carrier undecaprenyl phosphate, yielding undecaprenyl-pyrophosphoryl-MurNAc-pentapeptide, known as lipid I. The sequence is that of Phospho-N-acetylmuramoyl-pentapeptide-transferase from Phocaeicola vulgatus (strain ATCC 8482 / DSM 1447 / JCM 5826 / CCUG 4940 / NBRC 14291 / NCTC 11154) (Bacteroides vulgatus).